Consider the following 974-residue polypeptide: Kinesin-like protein KIN-7A (974 aa).

The segment at 1–29 (MTIKTPGTPVSKMDRTPAVTPGGSSRSRE) is disordered. One can recognise a Kinesin motor domain in the interval 31 to 353 (KIVVTVRLRP…LYFANRAKEV (323 aa)). 117 to 124 (GQTSSGKT) provides a ligand contact to ATP. Coiled-coil stretches lie at residues 362 to 435 (VVSD…KGLN) and 565 to 603 (SANLKEEITRLHSQGSTIANLEEQLESVQKSIDKLVMSL). 2 disordered regions span residues 605 to 649 (SNIS…PCSP) and 663 to 713 (NKAP…SSVN). Residues 616–628 (TKNHHHQSKKKKL) are compositionally biased toward basic residues. Polar residues-rich tracts occupy residues 638-649 (NRQNFLKSPCSP) and 666-682 (PQENNSSAARGATTPQG). Positions 683 to 693 (SEKETPQKGEE) are enriched in basic and acidic residues.

It belongs to the TRAFAC class myosin-kinesin ATPase superfamily. Kinesin family. KIN-7 subfamily. In terms of processing, phosphorylated at Thr-145, Thr-687 and Thr-703 by CDKAs and CDKBs. Phosphorylated NACK1 fails to mediate cytokinesis. Expressed in roots, flowers, pollen mother cells and embryos.

It is found in the cytoplasm. It localises to the cytoskeleton. The protein localises to the phragmoplast. In terms of biological role, probable plus end-directed motor protein that functions in the NACK-PQR (ANP1-MKK6-MPK4) MAP kinase signaling pathway, which is essential for somatic cell cytokinesis, especially for the cell-plate formation and its expansion. Regulates the activity and the localization of ANP1, probably by association through the non-catalytic region of the kinase. Functionally redundant with NACK2 and essential to promote the progression of cytokinesis and for cellularization (formation of the cell plate) during microgametogenesis and megagametogenesis. This Arabidopsis thaliana (Mouse-ear cress) protein is Kinesin-like protein KIN-7A.